Here is a 195-residue protein sequence, read N- to C-terminus: Protein hunchback (195 aa).

Disordered regions lie at residues 16–57, 64–83, and 155–195; these read SHHH…SHTN, LKQQQQQQQQHQHQQQQQPM, and LTPP…KYMA. A compositionally biased stretch (basic residues) spans 17 to 29; that stretch reads HHHHHHHAHHSHH. Composition is skewed to low complexity over residues 33-44 and 66-81; these read SNSNSNASSPHQ and QQQQQQQQHQHQQQQQ. A compositionally biased stretch (basic and acidic residues) spans 176 to 195; the sequence is EPEKEHDLMSNSSEDMKYMA.

The protein belongs to the hunchback C2H2-type zinc-finger protein family.

It localises to the nucleus. Functionally, gap class segmentation protein that controls development of head structures. This Drosophila dasycnemia (Fruit fly) protein is Protein hunchback (hb).